We begin with the raw amino-acid sequence, 400 residues long: Acetate kinase (400 aa).

N7 serves as a coordination point for Mg(2+). K14 contributes to the ATP binding site. Residue R91 coordinates substrate. Residue D148 is the Proton donor/acceptor of the active site. ATP contacts are provided by residues 208-212 (HIGNG), 283-285 (DFR), and 332-336 (GIGEH). E387 provides a ligand contact to Mg(2+).

This sequence belongs to the acetokinase family. As to quaternary structure, homodimer. The cofactor is Mg(2+). It depends on Mn(2+) as a cofactor.

Its subcellular location is the cytoplasm. It catalyses the reaction acetate + ATP = acetyl phosphate + ADP. It functions in the pathway metabolic intermediate biosynthesis; acetyl-CoA biosynthesis; acetyl-CoA from acetate: step 1/2. In terms of biological role, catalyzes the formation of acetyl phosphate from acetate and ATP. Can also catalyze the reverse reaction. The polypeptide is Acetate kinase (Clostridium beijerinckii (strain ATCC 51743 / NCIMB 8052) (Clostridium acetobutylicum)).